Consider the following 106-residue polypeptide: Large ribosomal subunit protein uL24 (106 aa).

The segment covering 84-97 has biased composition (basic and acidic residues); sequence EKIGRELGAKEKAR. The tract at residues 84–106 is disordered; sequence EKIGRELGAKEKARLQKRKAAAK.

This sequence belongs to the universal ribosomal protein uL24 family. In terms of assembly, part of the 50S ribosomal subunit.

In terms of biological role, one of two assembly initiator proteins, it binds directly to the 5'-end of the 23S rRNA, where it nucleates assembly of the 50S subunit. Its function is as follows. One of the proteins that surrounds the polypeptide exit tunnel on the outside of the subunit. This is Large ribosomal subunit protein uL24 from Anaeromyxobacter sp. (strain K).